A 434-amino-acid chain; its full sequence is Perilipin-3 (434 aa).

Residues 1-22 (MSADGAEADGSTQVTVEEPVQQ) are disordered. S2 is subject to N-acetylserine. S31 is subject to Phosphoserine. N6-acetyllysine is present on K65. S91 carries the phosphoserine modification. K122 participates in a covalent cross-link: Glycyl lysine isopeptide (Lys-Gly) (interchain with G-Cter in SUMO1). S130 and S148 each carry phosphoserine. T170 bears the Phosphothreonine mark. Residues S175 and S179 each carry the phosphoserine modification. T216 bears the Phosphothreonine mark. Residues S217 and S241 each carry the phosphoserine modification. Y251 carries the phosphotyrosine modification. 2 coiled-coil regions span residues 252-277 (EHSL…QVLS) and 353-377 (TNVK…SSIH).

Belongs to the perilipin family. In terms of assembly, homooligomer. Interacts with M6PR (via the cytoplasmic domain). Interacts with IGF2R (via the cytoplasmic domain). As to quaternary structure, may exist as a homodimer. Post-translationally, phosphorylation at Tyr-251 by isoform 1 of CHKA (CHKalpha2) promotes dissociation from lipid droplets: dissociation is followed by recruitment of autophagosome machinery to lipid droplets and subsequent lipid droplet lipolysis.

Its subcellular location is the lipid droplet. The protein resides in the endosome membrane. The protein localises to the cytoplasm. Its function is as follows. Structural component of lipid droplets, which is required for the formation and maintenance of lipid storage droplets. Required for the transport of mannose 6-phosphate receptors (MPR) from endosomes to the trans-Golgi network. The polypeptide is Perilipin-3 (PLIN3) (Homo sapiens (Human)).